A 49-amino-acid chain; its full sequence is U3-plectoxin-Pt1a (49 aa).

5 disulfides stabilise this stretch: C2/C16, C9/C30, C15/C41, C32/C39, and C45/C49.

In terms of tissue distribution, expressed by the venom gland.

Its subcellular location is the secreted. Functionally, potent toxin that may paralyze and/or kill insect pests such as H.virescens (lepidoptera), S.exigua (beet armyworm) and M.sexta (tobacco hornworm). The sequence is that of U3-plectoxin-Pt1a from Plectreurys tristis (Spider).